We begin with the raw amino-acid sequence, 315 residues long: tRNA dimethylallyltransferase (315 aa).

10-17 is a binding site for ATP; that stretch reads GPTEVGKT. A substrate-binding site is contributed by 12–17; sequence TEVGKT. The interaction with substrate tRNA stretch occupies residues 35 to 38; the sequence is DSMQ.

Belongs to the IPP transferase family. As to quaternary structure, monomer. Requires Mg(2+) as cofactor.

It carries out the reaction adenosine(37) in tRNA + dimethylallyl diphosphate = N(6)-dimethylallyladenosine(37) in tRNA + diphosphate. Its function is as follows. Catalyzes the transfer of a dimethylallyl group onto the adenine at position 37 in tRNAs that read codons beginning with uridine, leading to the formation of N6-(dimethylallyl)adenosine (i(6)A). This chain is tRNA dimethylallyltransferase, found in Geobacillus thermodenitrificans (strain NG80-2).